Consider the following 441-residue polypeptide: D-inositol 3-phosphate glycosyltransferase (441 aa).

His38 is a binding site for 1D-myo-inositol 3-phosphate. UDP-N-acetyl-alpha-D-glucosamine contacts are provided by residues 44-45 (QP) and Gly52. 1D-myo-inositol 3-phosphate is bound by residues 49–54 (DAGGMN), Lys107, Tyr140, Thr164, and Arg184. UDP-N-acetyl-alpha-D-glucosamine contacts are provided by Arg258, Lys263, and Gln316. The Mg(2+) site is built by Phe325, Gln326, and Ala328. Residues Glu338 and Glu346 each coordinate UDP-N-acetyl-alpha-D-glucosamine. Thr352 serves as a coordination point for Mg(2+).

The protein belongs to the glycosyltransferase group 1 family. MshA subfamily. Homodimer.

It catalyses the reaction 1D-myo-inositol 3-phosphate + UDP-N-acetyl-alpha-D-glucosamine = 1D-myo-inositol 2-acetamido-2-deoxy-alpha-D-glucopyranoside 3-phosphate + UDP + H(+). Functionally, catalyzes the transfer of a N-acetyl-glucosamine moiety to 1D-myo-inositol 3-phosphate to produce 1D-myo-inositol 2-acetamido-2-deoxy-glucopyranoside 3-phosphate in the mycothiol biosynthesis pathway. The chain is D-inositol 3-phosphate glycosyltransferase from Mycolicibacterium paratuberculosis (strain ATCC BAA-968 / K-10) (Mycobacterium paratuberculosis).